Reading from the N-terminus, the 288-residue chain is Nucleotide-binding protein PM0169 (288 aa).

Residue 8–15 participates in ATP binding; the sequence is GHSGAGKS. 56–59 contributes to the GTP binding site; the sequence is DIRN.

This sequence belongs to the RapZ-like family.

In terms of biological role, displays ATPase and GTPase activities. This chain is Nucleotide-binding protein PM0169, found in Pasteurella multocida (strain Pm70).